Reading from the N-terminus, the 683-residue chain is Transforming growth factor-beta-induced protein ig-h3 (683 aa).

A signal peptide spans 1 to 23; it reads MALLGRLLPLALALALGPAATPA. Ser-37 carries the post-translational modification Phosphoserine. The EMI domain maps to 45–99; it reads GPNVCAVQKLIGTNKKYFTNCKQWYQRKICGKSTVISYECCPGYEKVPGEKGCPA. Disulfide bonds link Cys-49–Cys-85, Cys-74–Cys-339, Cys-84–Cys-97, Cys-214–Cys-317, and Cys-473–Cys-478. At Cys-65 the chain carries S-cysteinyl cysteine. 4 FAS1 domains span residues 103–236, 240–371, 375–498, and 502–632; these read LSNL…DKVI, TNNI…DELL, SAKT…DRML, and MGTV…SSVL. A Cell attachment site motif is present at residues 642-644; that stretch reads RGD.

Binds to type I, II, and IV collagens. Gamma-carboxylation is controversial. Gamma-carboxyglutamated; gamma-carboxyglutamate residues are formed by vitamin K dependent carboxylation; this may be required for calcium binding. According to a more recent report, does not contain vitamin K-dependent gamma-carboxyglutamate residues. In terms of processing, the EMI domain contains 2 expected intradomain disulfide bridges (Cys-49-Cys85 and Cys-84-Cys-97) and one unusual interdomain disulfide bridge to the second FAS1 domain (Cys-74-Cys-339). This arrangement violates the predicted disulfide bridge pattern of an EMI domain.

The protein localises to the secreted. The protein resides in the extracellular space. Its subcellular location is the extracellular matrix. Plays a role in cell adhesion. May play a role in cell-collagen interactions. This Bos taurus (Bovine) protein is Transforming growth factor-beta-induced protein ig-h3 (TGFBI).